The chain runs to 147 residues: uncharacterized protein (147 aa).

The segment covering 72–81 (ARAKPASRAP) has biased composition (low complexity). A disordered region spans residues 72–147 (ARAKPASRAP…QGAAGRRLSP (76 aa)).

This is an uncharacterized protein from Homo sapiens (Human).